A 630-amino-acid polypeptide reads, in one-letter code: Conserved oligomeric Golgi complex subunit 6 (630 aa).

Belongs to the COG6 family. In terms of assembly, component of the conserved oligomeric Golgi complex which is composed of eight different subunits and is required for normal Golgi morphology and localization.

It is found in the golgi apparatus membrane. Functionally, required for normal Golgi function. The chain is Conserved oligomeric Golgi complex subunit 6 from Drosophila melanogaster (Fruit fly).